Consider the following 69-residue polypeptide: MSFEVLEQLEARVQSAVDGITLLKMELDELRAQNQQLKEENQHLRNEHQAWQERLRSLLGKMDQMNSEG.

Residues 6-68 are a coiled coil; it reads LEQLEARVQS…LGKMDQMNSE (63 aa).

This sequence belongs to the ZapB family. In terms of assembly, homodimer. The ends of the coiled-coil dimer bind to each other, forming polymers. Interacts with FtsZ.

The protein resides in the cytoplasm. Non-essential, abundant cell division factor that is required for proper Z-ring formation. It is recruited early to the divisome by direct interaction with FtsZ, stimulating Z-ring assembly and thereby promoting cell division earlier in the cell cycle. Its recruitment to the Z-ring requires functional FtsA or ZipA. The polypeptide is Cell division protein ZapB (Tolumonas auensis (strain DSM 9187 / NBRC 110442 / TA 4)).